The sequence spans 342 residues: Ribosomal RNA small subunit methyltransferase C (342 aa).

It belongs to the methyltransferase superfamily. RsmC family. In terms of assembly, monomer.

It localises to the cytoplasm. The enzyme catalyses guanosine(1207) in 16S rRNA + S-adenosyl-L-methionine = N(2)-methylguanosine(1207) in 16S rRNA + S-adenosyl-L-homocysteine + H(+). Functionally, specifically methylates the guanine in position 1207 of 16S rRNA in the 30S particle. The chain is Ribosomal RNA small subunit methyltransferase C from Citrobacter koseri (strain ATCC BAA-895 / CDC 4225-83 / SGSC4696).